A 421-amino-acid chain; its full sequence is Gamma-glutamyl phosphate reductase (421 aa).

The protein belongs to the gamma-glutamyl phosphate reductase family.

Its subcellular location is the cytoplasm. The enzyme catalyses L-glutamate 5-semialdehyde + phosphate + NADP(+) = L-glutamyl 5-phosphate + NADPH + H(+). Its pathway is amino-acid biosynthesis; L-proline biosynthesis; L-glutamate 5-semialdehyde from L-glutamate: step 2/2. Catalyzes the NADPH-dependent reduction of L-glutamate 5-phosphate into L-glutamate 5-semialdehyde and phosphate. The product spontaneously undergoes cyclization to form 1-pyrroline-5-carboxylate. The sequence is that of Gamma-glutamyl phosphate reductase from Ruegeria sp. (strain TM1040) (Silicibacter sp.).